The following is a 381-amino-acid chain: Lysophosphatidylserine lipase ABHD12 (381 aa).

The Cytoplasmic segment spans residues 1-58 (MRKRNESVTVEHERAAAAPAPLDKGCSLRHSLRLPAADTGMKRPLGRRHGLWFRLRRL). Residues 59–79 (IIWLLGVYIAIPFLVKLCPAI) form a helical membrane-spanning segment. The Extracellular segment spans residues 80 to 381 (QAKLVFLNFV…LGIPEHEHHH (302 aa)). N-linked (GlcNAc...) asparagine glycosylation is present at N106. Catalysis depends on S229, which acts as the Nucleophile. Active-site charge relay system residues include D316 and H355.

The protein belongs to the serine esterase family.

It localises to the endoplasmic reticulum membrane. The enzyme catalyses 1-(9Z-octadecenoyl)-sn-glycero-3-phospho-L-serine + H2O = sn-glycero-3-phospho-L-serine + (9Z)-octadecenoate + H(+). The catalysed reaction is 1-(9Z-octadecenoyl)-sn-glycero-3-phospho-(1'-sn-glycerol) + H2O = sn-glycero-3-phospho-(1'-sn-glycerol) + (9Z)-octadecenoate + H(+). It carries out the reaction 1-(9Z-octadecenoyl)-sn-glycero-3-phospho-(1D-myo-inositol) + H2O = sn-glycero-3-phospho-1D-myo-inositol + (9Z)-octadecenoate + H(+). It catalyses the reaction 1-(9Z-octadecenoyl)-sn-glycero-3-phosphoethanolamine + H2O = sn-glycero-3-phosphoethanolamine + (9Z)-octadecenoate + H(+). The enzyme catalyses 1-(9Z-octadecenoyl)-sn-glycero-3-phosphocholine + H2O = 1-(9Z-octadecenoyl)-sn-glycerol + phosphocholine + H(+). The catalysed reaction is 2-(9Z-octadecenoyl)-glycerol + H2O = glycerol + (9Z)-octadecenoate + H(+). It carries out the reaction 1-hexadecanoyl-sn-glycero-3-phospho-L-serine + H2O = sn-glycero-3-phospho-L-serine + hexadecanoate + H(+). It catalyses the reaction 2-(5Z,8Z,11Z,14Z-eicosatetraenoyl)-glycerol + H2O = glycerol + (5Z,8Z,11Z,14Z)-eicosatetraenoate + H(+). The enzyme catalyses Hydrolyzes glycerol monoesters of long-chain fatty acids.. The catalysed reaction is 1-decanoylglycerol + H2O = decanoate + glycerol + H(+). It carries out the reaction 1-dodecanoylglycerol + H2O = dodecanoate + glycerol + H(+). It catalyses the reaction 1-tetradecanoylglycerol + H2O = tetradecanoate + glycerol + H(+). The enzyme catalyses 2-hexadecanoylglycerol + H2O = glycerol + hexadecanoate + H(+). The catalysed reaction is 1-(9Z-octadecenoyl)-glycerol + H2O = glycerol + (9Z)-octadecenoate + H(+). It carries out the reaction 2-(9Z,12Z-octadecadienoyl)-glycerol + H2O = (9Z,12Z)-octadecadienoate + glycerol + H(+). It catalyses the reaction 1-(5Z,8Z,11Z,14Z-eicosatetraenoyl)-glycerol + H2O = glycerol + (5Z,8Z,11Z,14Z)-eicosatetraenoate + H(+). The enzyme catalyses 1-(9Z,12Z-octadecadienoyl)-glycerol + H2O = (9Z,12Z)-octadecadienoate + glycerol + H(+). The catalysed reaction is 1-hexadecanoylglycerol + H2O = glycerol + hexadecanoate + H(+). It carries out the reaction 1-octadecanoylglycerol + H2O = octadecanoate + glycerol + H(+). It catalyses the reaction 1-octadecanoyl-2-(9,10-epoxyoctadecanoyl)-sn-glycero-3-phospho-L-serine + H2O = 9,10-epoxyoctadecanoate + 1-octadecanoyl-sn-glycero-3-phosphoserine + H(+). The enzyme catalyses 1-octadecanoyl-2-(10-hydroxyoctadecanoyl)-sn-glycero-3-phospho-L-serine + H2O = 1-octadecanoyl-sn-glycero-3-phosphoserine + 10-hydroxyoctadecanoate + H(+). The catalysed reaction is 1-hexadecanoyl-2-(10-hydroxyoctadecanoyl)-sn-glycero-3-phospho-L-serine + H2O = 10-hydroxyoctadecanoate + 1-hexadecanoyl-sn-glycero-3-phospho-L-serine + H(+). Lysophosphatidylserine (LPS) lipase that mediates the hydrolysis of lysophosphatidylserine, a class of signaling lipids that regulates immunological and neurological processes. Represents a major lysophosphatidylserine lipase in the brain, thereby playing a key role in the central nervous system. Also able to hydrolyze oxidized phosphatidylserine; oxidized phosphatidylserine is produced in response to severe inflammatory stress and constitutes a proapoptotic 'eat me' signal. Also has monoacylglycerol (MAG) lipase activity: hydrolyzes 2-arachidonoylglycerol (2-AG), thereby acting as a regulator of endocannabinoid signaling pathways. Has a strong preference for very-long-chain lipid substrates; substrate specificity is likely due to improved catalysis and not improved substrate binding. This is Lysophosphatidylserine lipase ABHD12 from Gallus gallus (Chicken).